The sequence spans 500 residues: 7-alpha-hydroxycholest-4-en-3-one 12-alpha-hydroxylase (500 aa).

A helical transmembrane segment spans residues 4 to 24 (WCTVLGALLTVVGCLCLSLLL). Serine 325 bears the Phosphoserine mark. Cysteine 439 is a binding site for heme.

This sequence belongs to the cytochrome P450 family. Heme serves as cofactor. Expressed in liver.

It is found in the endoplasmic reticulum membrane. It localises to the microsome membrane. The enzyme catalyses 7alpha-hydroxycholest-4-en-3-one + reduced [NADPH--hemoprotein reductase] + O2 = 7alpha,12alpha-dihydroxycholest-4-en-3-one + oxidized [NADPH--hemoprotein reductase] + H2O + H(+). It catalyses the reaction 5beta-cholestane-3alpha,7alpha-diol + reduced [NADPH--hemoprotein reductase] + O2 = 5beta-cholestane-3alpha,7alpha,12alpha-triol + oxidized [NADPH--hemoprotein reductase] + H2O + H(+). The catalysed reaction is chenodeoxycholate + reduced [NADPH--hemoprotein reductase] + O2 = cholate + oxidized [NADPH--hemoprotein reductase] + H2O + H(+). It participates in lipid metabolism; bile acid biosynthesis. Functionally, a cytochrome P450 monooxygenase involved in primary bile acid biosynthesis. Catalyzes the 12alpha-hydroxylation of 7alpha-hydroxy-4-cholesten-3-one, an intermediate metabolite in cholic acid biosynthesis. Controls biliary balance of cholic acid and chenodeoxycholic acid, ultimately regulating the intestinal absorption of dietary lipids. Mechanistically, uses molecular oxygen inserting one oxygen atom into a substrate, and reducing the second into a water molecule, with two electrons provided by NADPH via cytochrome P450 reductase (CPR; NADPH--hemoprotein reductase). This chain is 7-alpha-hydroxycholest-4-en-3-one 12-alpha-hydroxylase (Cyp8b1), found in Mus musculus (Mouse).